The primary structure comprises 400 residues: Nicotinate phosphoribosyltransferase (400 aa).

A Phosphohistidine; by autocatalysis modification is found at histidine 220.

This sequence belongs to the NAPRTase family. In terms of processing, transiently phosphorylated on a His residue during the reaction cycle. Phosphorylation strongly increases the affinity for substrates and increases the rate of nicotinate D-ribonucleotide production. Dephosphorylation regenerates the low-affinity form of the enzyme, leading to product release.

It catalyses the reaction nicotinate + 5-phospho-alpha-D-ribose 1-diphosphate + ATP + H2O = nicotinate beta-D-ribonucleotide + ADP + phosphate + diphosphate. The protein operates within cofactor biosynthesis; NAD(+) biosynthesis; nicotinate D-ribonucleotide from nicotinate: step 1/1. Catalyzes the synthesis of beta-nicotinate D-ribonucleotide from nicotinate and 5-phospho-D-ribose 1-phosphate at the expense of ATP. In Salmonella heidelberg (strain SL476), this protein is Nicotinate phosphoribosyltransferase.